The sequence spans 391 residues: ATP phosphoribosyltransferase regulatory subunit (391 aa).

The protein belongs to the class-II aminoacyl-tRNA synthetase family. HisZ subfamily. As to quaternary structure, heteromultimer composed of HisG and HisZ subunits.

It localises to the cytoplasm. Its pathway is amino-acid biosynthesis; L-histidine biosynthesis; L-histidine from 5-phospho-alpha-D-ribose 1-diphosphate: step 1/9. In terms of biological role, required for the first step of histidine biosynthesis. May allow the feedback regulation of ATP phosphoribosyltransferase activity by histidine. The chain is ATP phosphoribosyltransferase regulatory subunit from Prochlorococcus marinus (strain SARG / CCMP1375 / SS120).